Reading from the N-terminus, the 613-residue chain is Secretogranin-2 (613 aa).

Residues Met1–Ala27 form the signal peptide. Residues Ala28 to Phe30 constitute a propeptide that is removed on maturation. Disordered stretches follow at residues Gln67–Ser105 and Gln119–Met146. A compositionally biased stretch (basic and acidic residues) spans Glu92 to Ser105. Tyr150 carries the post-translational modification Sulfotyrosine. Ser173, Ser267, Ser428, Ser528, Ser551, and Ser552 each carry phosphoserine. Over residues Glu257 to Arg283 the composition is skewed to basic and acidic residues. The segment at Glu257–Leu287 is disordered. The segment covering His546–Lys557 has biased composition (basic and acidic residues). The tract at residues His546–Tyr580 is disordered.

Belongs to the chromogranin/secretogranin protein family. Interacts with Secretogranin III/SCG3. Highest levels detected in anterior pituitary followed by adrenal medulla and posterior pituitary (at protein level). In the brain, high levels are found in the hypothalamus, comparable to those present in posterior pituitary with two- to six-fold lower levels present in the other brain regions investigated including caudate nucleus, hippocampus, thalamus and brainstem (at protein level).

The protein localises to the secreted. Neuroendocrine protein of the granin family that regulates the biogenesis of secretory granules. The chain is Secretogranin-2 (SCG2) from Bos taurus (Bovine).